Reading from the N-terminus, the 160-residue chain is uncharacterized protein (160 aa).

An N-terminal signal peptide occupies residues 1–29 (MCGLGIVPMVKPALFGMLILVIGTSTVQA).

This is an uncharacterized protein from Sinorhizobium fredii (strain NBRC 101917 / NGR234).